Here is a 95-residue protein sequence, read N- to C-terminus: Co-chaperonin GroES (95 aa).

The protein belongs to the GroES chaperonin family. As to quaternary structure, heptamer of 7 subunits arranged in a ring. Interacts with the chaperonin GroEL.

The protein resides in the cytoplasm. Functionally, together with the chaperonin GroEL, plays an essential role in assisting protein folding. The GroEL-GroES system forms a nano-cage that allows encapsulation of the non-native substrate proteins and provides a physical environment optimized to promote and accelerate protein folding. GroES binds to the apical surface of the GroEL ring, thereby capping the opening of the GroEL channel. This Francisella philomiragia subsp. philomiragia (strain ATCC 25017 / CCUG 19701 / FSC 153 / O#319-036) protein is Co-chaperonin GroES.